The following is a 336-amino-acid chain: DNA-directed RNA polymerase subunit alpha (336 aa).

Residues 1–232 (MIQKNWQELI…DQLSVFVNFD (232 aa)) are alpha N-terminal domain (alpha-NTD). Residues 248–336 (FNPALLKKVD…DLAKRYEDQY (89 aa)) form an alpha C-terminal domain (alpha-CTD) region.

Belongs to the RNA polymerase alpha chain family. As to quaternary structure, homodimer. The RNAP catalytic core consists of 2 alpha, 1 beta, 1 beta' and 1 omega subunit. When a sigma factor is associated with the core the holoenzyme is formed, which can initiate transcription.

The catalysed reaction is RNA(n) + a ribonucleoside 5'-triphosphate = RNA(n+1) + diphosphate. DNA-dependent RNA polymerase catalyzes the transcription of DNA into RNA using the four ribonucleoside triphosphates as substrates. This chain is DNA-directed RNA polymerase subunit alpha, found in Sinorhizobium fredii (strain NBRC 101917 / NGR234).